The chain runs to 825 residues: Exocyst complex component SEC10a (825 aa).

The stretch at 244–266 forms a coiled coil; sequence RGLEVAVANLQDYCNELENRLLS.

The protein belongs to the SEC10 family. As to quaternary structure, the exocyst complex is composed of SEC3, SEC5, SEC6, SEC8, SEC10, EXO70A1 and EXO84B. Interacts with EXO84B. Binds to EXO70E2. Binds directly to B1L. As to expression, expressed in seedlings, roots, leaves and flowers.

It is found in the cytoplasm. The protein localises to the cytosol. It localises to the secreted. Its subcellular location is the extracellular exosome. In terms of biological role, component of the exocyst complex involved in the docking of exocytic vesicles with fusion sites on the plasma membrane during regulated or polarized secretion. Involved in polarized cell growth and organ morphogenesis. During cytokinesis, involved in cell plate initiation, cell plate maturation and formation of new primary cell wall. The chain is Exocyst complex component SEC10a from Arabidopsis thaliana (Mouse-ear cress).